A 518-amino-acid chain; its full sequence is Integrator complex subunit 14 (518 aa).

The VWFA domain maps to 2–204 (PTVVVMDVSL…KNVQSMFGKL (203 aa)). Mg(2+)-binding residues include serine 10, serine 12, and threonine 86.

Belongs to the Integrator subunit 14 family. Component of the Integrator complex, composed of core subunits INTS1, INTS2, INTS3, INTS4, INTS5, INTS6, INTS7, INTS8, INTS9/RC74, INTS10, INTS11/CPSF3L, INTS12, INTS13, INTS14 and INTS15. The core complex associates with protein phosphatase 2A subunits PPP2CA and PPP2R1A, to form the Integrator-PP2A (INTAC) complex. INTS14 is part of the tail subcomplex, composed of INTS10, INTS13, INTS14 and INTS15.

It localises to the nucleus. Functionally, component of the integrator complex, a multiprotein complex that terminates RNA polymerase II (Pol II) transcription in the promoter-proximal region of genes. The integrator complex provides a quality checkpoint during transcription elongation by driving premature transcription termination of transcripts that are unfavorably configured for transcriptional elongation: the complex terminates transcription by (1) catalyzing dephosphorylation of the C-terminal domain (CTD) of Pol II subunit POLR2A/RPB1 and SUPT5H/SPT5, (2) degrading the exiting nascent RNA transcript via endonuclease activity and (3) promoting the release of Pol II from bound DNA. The integrator complex is also involved in terminating the synthesis of non-coding Pol II transcripts, such as enhancer RNAs (eRNAs), small nuclear RNAs (snRNAs), telomerase RNAs and long non-coding RNAs (lncRNAs). Within the integrator complex, INTS14 is part of the integrator tail module that acts as a platform for the recruitment of transcription factors at promoters. This is Integrator complex subunit 14 from Xenopus tropicalis (Western clawed frog).